Reading from the N-terminus, the 307-residue chain is Pantothenate kinase (307 aa).

87–94 serves as a coordination point for ATP; it reads GSVAVGKS.

The protein belongs to the prokaryotic pantothenate kinase family.

It is found in the cytoplasm. It catalyses the reaction (R)-pantothenate + ATP = (R)-4'-phosphopantothenate + ADP + H(+). The protein operates within cofactor biosynthesis; coenzyme A biosynthesis; CoA from (R)-pantothenate: step 1/5. This is Pantothenate kinase from Vibrio vulnificus (strain YJ016).